Reading from the N-terminus, the 452-residue chain is Bifunctional protein GlmU (452 aa).

The interval 1-231 (MSRTCLAVIL…EAELAGCNNR (231 aa)) is pyrophosphorylase. Residues 10–13 (LAAG), lysine 24, glutamine 77, 82–83 (GT), 105–107 (YGD), glycine 143, glutamate 157, asparagine 172, and asparagine 229 each bind UDP-N-acetyl-alpha-D-glucosamine. Aspartate 107 is a Mg(2+) binding site. Asparagine 229 serves as a coordination point for Mg(2+). Residues 232 to 252 (AELAVIEKLWQERRRHELMLS) are linker. Positions 253–452 (GVSMIAPETV…MAIKAFSGKV (200 aa)) are N-acetyltransferase. UDP-N-acetyl-alpha-D-glucosamine is bound by residues arginine 318 and lysine 336. Histidine 348 (proton acceptor) is an active-site residue. UDP-N-acetyl-alpha-D-glucosamine is bound by residues tyrosine 351 and asparagine 362. Residues alanine 365, 371-372 (NY), serine 390, serine 408, and arginine 425 contribute to the acetyl-CoA site.

This sequence in the N-terminal section; belongs to the N-acetylglucosamine-1-phosphate uridyltransferase family. In the C-terminal section; belongs to the transferase hexapeptide repeat family. Homotrimer. Mg(2+) is required as a cofactor.

It is found in the cytoplasm. It catalyses the reaction alpha-D-glucosamine 1-phosphate + acetyl-CoA = N-acetyl-alpha-D-glucosamine 1-phosphate + CoA + H(+). The enzyme catalyses N-acetyl-alpha-D-glucosamine 1-phosphate + UTP + H(+) = UDP-N-acetyl-alpha-D-glucosamine + diphosphate. It functions in the pathway nucleotide-sugar biosynthesis; UDP-N-acetyl-alpha-D-glucosamine biosynthesis; N-acetyl-alpha-D-glucosamine 1-phosphate from alpha-D-glucosamine 6-phosphate (route II): step 2/2. The protein operates within nucleotide-sugar biosynthesis; UDP-N-acetyl-alpha-D-glucosamine biosynthesis; UDP-N-acetyl-alpha-D-glucosamine from N-acetyl-alpha-D-glucosamine 1-phosphate: step 1/1. Its pathway is bacterial outer membrane biogenesis; LPS lipid A biosynthesis. Functionally, catalyzes the last two sequential reactions in the de novo biosynthetic pathway for UDP-N-acetylglucosamine (UDP-GlcNAc). The C-terminal domain catalyzes the transfer of acetyl group from acetyl coenzyme A to glucosamine-1-phosphate (GlcN-1-P) to produce N-acetylglucosamine-1-phosphate (GlcNAc-1-P), which is converted into UDP-GlcNAc by the transfer of uridine 5-monophosphate (from uridine 5-triphosphate), a reaction catalyzed by the N-terminal domain. This Allorhizobium ampelinum (strain ATCC BAA-846 / DSM 112012 / S4) (Agrobacterium vitis (strain S4)) protein is Bifunctional protein GlmU.